A 433-amino-acid polypeptide reads, in one-letter code: SPI-2 type 3 secretion system ATPase (433 aa).

165–170 is an ATP binding site; it reads GVGKST.

Belongs to the ATPase alpha/beta chains family. T3SS ATPase subfamily. As to quaternary structure, the core secretion machinery of the T3SS is composed of approximately 20 different proteins, including cytoplasmic components, a base, an export apparatus and a needle. This subunit is part of the cytosolic complex. Forms homohexamers. Forms a complex with SsaK/SctL (stator protein) and SsaQ/SctQ (the major sorting platform component). Interacts with the T3SS-2 specific chaperones SsaE, SseA, SscA, SscB, and SrcA.

Its subcellular location is the cytoplasm. The enzyme catalyses ATP + H2O + cellular proteinSide 1 = ADP + phosphate + cellular proteinSide 2.. Functionally, ATPase component of the type III secretion system (T3SS), also called injectisome, which is used to inject bacterial effector proteins into eukaryotic host cells. Acts as a molecular motor to provide the energy that is required for the export of proteins. Required for type III secretion apparatus (T3SA) formation, secretion of a subset of SPI-2 effectors and virulence. May play a critical role in T3SS substrate recognition, disassembly of the effector/chaperone complex and unfolding of the effector in an ATP-dependent manner prior to secretion. Releases the effector protein SseB from the T3SS-2 specific chaperone SsaE in an ATP-dependent manner. This chain is SPI-2 type 3 secretion system ATPase, found in Salmonella typhimurium (strain LT2 / SGSC1412 / ATCC 700720).